A 216-amino-acid polypeptide reads, in one-letter code: MLGIGAFKQRIPRPGEALPGREQALPLHNTHLINGHPLRGEFTGLAQVQFGLGCFWGAERKFWKVPGVYTTAAGYAGGQTPNATYSEVCSGQTGHTEAVLVVFDEQAVSFEHLLRTFWESHDPTQGMQQGNDVGTQYRSAIYCTTQAQYAAALASRDAYQQQLTAAGYGAITTEIGFPAPTFYYAEDDHQQYLAKHPNGYCGLGGTGVSCPIGLDA.

Residue C54 is part of the active site.

It belongs to the MsrA Met sulfoxide reductase family.

The catalysed reaction is L-methionyl-[protein] + [thioredoxin]-disulfide + H2O = L-methionyl-(S)-S-oxide-[protein] + [thioredoxin]-dithiol. It carries out the reaction [thioredoxin]-disulfide + L-methionine + H2O = L-methionine (S)-S-oxide + [thioredoxin]-dithiol. Functionally, has an important function as a repair enzyme for proteins that have been inactivated by oxidation. Catalyzes the reversible oxidation-reduction of methionine sulfoxide in proteins to methionine. This Xanthomonas oryzae pv. oryzae (strain PXO99A) protein is Peptide methionine sulfoxide reductase MsrA.